Consider the following 235-residue polypeptide: Putative homeobox-leucine zipper protein ATHB-51 (235 aa).

Residues 74 to 133 (EMIKKKRLTSGQLASLERSFQEEIKLDSDRKVKLSRELGLQPRQIAVWFQNRRARWKAKQ) constitute a DNA-binding region (homeobox). Residues 134–162 (LEQLYDSLRQEYDVVSREKQMLHDEVKKL) are leucine-zipper.

This sequence belongs to the HD-ZIP homeobox family. Class I subfamily. In terms of tissue distribution, widely expressed.

The protein resides in the nucleus. Functionally, putative transcription factor. The polypeptide is Putative homeobox-leucine zipper protein ATHB-51 (ATHB-51) (Arabidopsis thaliana (Mouse-ear cress)).